The following is a 466-amino-acid chain: Asparagine--tRNA ligase (466 aa).

Belongs to the class-II aminoacyl-tRNA synthetase family. Homodimer.

The protein localises to the cytoplasm. It catalyses the reaction tRNA(Asn) + L-asparagine + ATP = L-asparaginyl-tRNA(Asn) + AMP + diphosphate + H(+). This is Asparagine--tRNA ligase from Shewanella loihica (strain ATCC BAA-1088 / PV-4).